Consider the following 237-residue polypeptide: Large ribosomal subunit protein bL25 (237 aa).

Positions 1–104 are N-terminal domain; it reads MELTAKPRTP…SVPVHTTGRS (104 aa). The interval 105 to 189 is middle domain; the sequence is QGEVQGGLVD…ELEAEVQAAQ (85 aa). The tract at residues 190 to 237 is C-terminal domain; that stretch reads VAGLVAAGELSEEAAEAVLEGDASLEEVKAEASEDNAGTDSEDNSDAQ. Residues 205–237 are disordered; the sequence is EAVLEGDASLEEVKAEASEDNAGTDSEDNSDAQ.

This sequence belongs to the bacterial ribosomal protein bL25 family. CTC subfamily. In terms of assembly, part of the 50S ribosomal subunit. Contacts proteins L11 and L16, the A site tRNA, and the 5S and 23S rRNAs.

Its function is as follows. This is one of 3 proteins that mediate the attachment of the 5S rRNA onto the large ribosomal subunit. This protein has three domains. The N-terminal one is bound on the solvent face, the middle domain fills the space between the 5S rRNA and the L11 arm contacting the 23S rRNA while the C-terminal domain is on the edge of the intersubunit interface and contacts the A site. The protein conformation changes upon binding of a tRNA mimic to the A site, although the mimic does not interact directly with CTC itself, consistent with CTCs presumed role in moderating A site binding. This is Large ribosomal subunit protein bL25 (rplY) from Deinococcus radiodurans (strain ATCC 13939 / DSM 20539 / JCM 16871 / CCUG 27074 / LMG 4051 / NBRC 15346 / NCIMB 9279 / VKM B-1422 / R1).